The following is a 164-amino-acid chain: Phosphopantetheine adenylyltransferase (164 aa).

Serine 10 contacts substrate. Residues 10–11 and histidine 18 contribute to the ATP site; that span reads SF. Lysine 42, methionine 74, and arginine 88 together coordinate substrate. Residues 89–91, glutamate 99, and 124–130 contribute to the ATP site; these read GLR and YFFVSAR.

The protein belongs to the bacterial CoaD family. In terms of assembly, homohexamer. Mg(2+) is required as a cofactor.

The protein localises to the cytoplasm. The enzyme catalyses (R)-4'-phosphopantetheine + ATP + H(+) = 3'-dephospho-CoA + diphosphate. It participates in cofactor biosynthesis; coenzyme A biosynthesis; CoA from (R)-pantothenate: step 4/5. Functionally, reversibly transfers an adenylyl group from ATP to 4'-phosphopantetheine, yielding dephospho-CoA (dPCoA) and pyrophosphate. In Anaeromyxobacter dehalogenans (strain 2CP-C), this protein is Phosphopantetheine adenylyltransferase.